A 365-amino-acid chain; its full sequence is MKRQLILEDGTVLIGTGFGGEIEKSGEVVFTTGMTGYQETLSDPSYCGQIVTFTYPLIGNYGINRDDFESIHPSVNGLIVNEICDHPSNFRNEISLNDYLKERNIPGLAGIDTRKLTRKIRQYGTLRGRLCNMDADVEYIVSQLKATVFTDHVKRVSTKDPYPSPGRGHRVVLVDFGMKHGILRELNKRDCDVIVVPYNTTAEEILRLSPDGIMLSNGPGDPKDVPEAIEMLKDIIGKVPLFGICLGHQLFALASGANTSKLKFGHRGLNHPVKNIATGKVAITSQNHGYAVEEESVENTELEITHVALNDGTVEGLRHKKFPAFTVQYHPEASAGPEDANDLFEDFLTMIENFKKEGEELCQNA.

CPSase regions lie at residues 1-166 (MKRQ…PSPG) and 1-169 (MKRQ…GRGH). Positions 45, 218, and 220 each coordinate L-glutamine. The Glutamine amidotransferase type-1 domain maps to 170 to 357 (RVVLVDFGMK…LTMIENFKKE (188 aa)). The active-site Nucleophile is Cys-245. Positions 246, 249, 287, 289, and 290 each coordinate L-glutamine. Active-site residues include His-330 and Glu-332.

The protein belongs to the CarA family. In terms of assembly, composed of two chains; the small (or glutamine) chain promotes the hydrolysis of glutamine to ammonia, which is used by the large (or ammonia) chain to synthesize carbamoyl phosphate. Tetramer of heterodimers (alpha,beta)4.

It carries out the reaction hydrogencarbonate + L-glutamine + 2 ATP + H2O = carbamoyl phosphate + L-glutamate + 2 ADP + phosphate + 2 H(+). The catalysed reaction is L-glutamine + H2O = L-glutamate + NH4(+). The protein operates within amino-acid biosynthesis; L-arginine biosynthesis; carbamoyl phosphate from bicarbonate: step 1/1. Its pathway is pyrimidine metabolism; UMP biosynthesis via de novo pathway; (S)-dihydroorotate from bicarbonate: step 1/3. Small subunit of the glutamine-dependent carbamoyl phosphate synthetase (CPSase). CPSase catalyzes the formation of carbamoyl phosphate from the ammonia moiety of glutamine, carbonate, and phosphate donated by ATP, constituting the first step of 2 biosynthetic pathways, one leading to arginine and/or urea and the other to pyrimidine nucleotides. The small subunit (glutamine amidotransferase) binds and cleaves glutamine to supply the large subunit with the substrate ammonia. The polypeptide is Carbamoyl phosphate synthase small chain (Bacillus anthracis).